The primary structure comprises 166 residues: uncharacterized protein (166 aa).

This is an uncharacterized protein from Bacillus subtilis (strain 168).